Here is a 584-residue protein sequence, read N- to C-terminus: Aspartate--tRNA(Asp/Asn) ligase (584 aa).

Glu-177 provides a ligand contact to L-aspartate. The tract at residues 201-204 (QLFK) is aspartate. L-aspartate is bound at residue Arg-223. Residues 223-225 (RDE) and Gln-232 contribute to the ATP site. Residue His-447 participates in L-aspartate binding. ATP is bound at residue Glu-481. Residue Arg-488 participates in L-aspartate binding. Residue 533-536 (GLDR) coordinates ATP.

Belongs to the class-II aminoacyl-tRNA synthetase family. Type 1 subfamily. Homodimer.

The protein resides in the cytoplasm. The catalysed reaction is tRNA(Asx) + L-aspartate + ATP = L-aspartyl-tRNA(Asx) + AMP + diphosphate. Its function is as follows. Aspartyl-tRNA synthetase with relaxed tRNA specificity since it is able to aspartylate not only its cognate tRNA(Asp) but also tRNA(Asn). Reaction proceeds in two steps: L-aspartate is first activated by ATP to form Asp-AMP and then transferred to the acceptor end of tRNA(Asp/Asn). The polypeptide is Aspartate--tRNA(Asp/Asn) ligase (Chlamydia abortus (strain DSM 27085 / S26/3) (Chlamydophila abortus)).